The sequence spans 375 residues: MQCALYDAGRCRSCQWITQPIPEQLSAKTVDLKNLLADFPVEEWCAPVSGPEQGFRNKAKMVVSGSVEKPLLGMLHRDGTPEDLCDCPLYPASFAPVFAALKPFIARAGLTPYNVARKRGELKYILLTESQSDGGMMLRFVLRSDTKLAQLRKALPWLQEQLPQLKVITVNIQPVHMAIMEGETEIYLTEQQALAERFNDVPLWIRPQSFFQTNPAVASQLYATARDWVRQLPVKHMWDLFCGVGGFGLHCATPDMQLTGIEIAPEAIACAKQSAAELGLTRLQFQALDSTQFATAQGEVPELVLVNPPRRGIGKPLCDYLSTMAPRFIIYSSCNAQTMAKDIRELPGYRIERVQLFDMFPHTAHYEVLTLLVKQ.

Residues Cys3, Cys11, Cys14, and Cys87 each coordinate [4Fe-4S] cluster. Positions 212, 241, 262, and 307 each coordinate S-adenosyl-L-methionine. Cys334 acts as the Nucleophile in catalysis.

Belongs to the class I-like SAM-binding methyltransferase superfamily. RNA M5U methyltransferase family. RlmC subfamily.

It carries out the reaction uridine(747) in 23S rRNA + S-adenosyl-L-methionine = 5-methyluridine(747) in 23S rRNA + S-adenosyl-L-homocysteine + H(+). Catalyzes the formation of 5-methyl-uridine at position 747 (m5U747) in 23S rRNA. This is 23S rRNA (uracil(747)-C(5))-methyltransferase RlmC from Escherichia coli O45:K1 (strain S88 / ExPEC).